The sequence spans 593 residues: Dihydroxy-acid dehydratase (593 aa).

A compositionally biased stretch (acidic residues) spans 1-17; sequence MSQQTEPDDDAALDGDE. The tract at residues 1 to 40 is disordered; the sequence is MSQQTEPDDDAALDGDEPGAYGKDERLRSREVTEGPERAP. Basic and acidic residues predominate over residues 22–40; the sequence is GKDERLRSREVTEGPERAP. Cysteine 72 lines the [2Fe-2S] cluster pocket. Aspartate 104 is a binding site for Mg(2+). [2Fe-2S] cluster is bound at residue cysteine 145. Mg(2+) is bound by residues aspartate 146 and lysine 147. Residue lysine 147 is modified to N6-carboxylysine. [2Fe-2S] cluster is bound at residue cysteine 217. Residue glutamate 475 participates in Mg(2+) binding. Residue serine 501 is the Proton acceptor of the active site.

Belongs to the IlvD/Edd family. As to quaternary structure, homodimer. The cofactor is [2Fe-2S] cluster. Mg(2+) serves as cofactor.

The catalysed reaction is (2R)-2,3-dihydroxy-3-methylbutanoate = 3-methyl-2-oxobutanoate + H2O. The enzyme catalyses (2R,3R)-2,3-dihydroxy-3-methylpentanoate = (S)-3-methyl-2-oxopentanoate + H2O. Its pathway is amino-acid biosynthesis; L-isoleucine biosynthesis; L-isoleucine from 2-oxobutanoate: step 3/4. It participates in amino-acid biosynthesis; L-valine biosynthesis; L-valine from pyruvate: step 3/4. Its function is as follows. Functions in the biosynthesis of branched-chain amino acids. Catalyzes the dehydration of (2R,3R)-2,3-dihydroxy-3-methylpentanoate (2,3-dihydroxy-3-methylvalerate) into 2-oxo-3-methylpentanoate (2-oxo-3-methylvalerate) and of (2R)-2,3-dihydroxy-3-methylbutanoate (2,3-dihydroxyisovalerate) into 2-oxo-3-methylbutanoate (2-oxoisovalerate), the penultimate precursor to L-isoleucine and L-valine, respectively. The polypeptide is Dihydroxy-acid dehydratase (Natronomonas pharaonis (strain ATCC 35678 / DSM 2160 / CIP 103997 / JCM 8858 / NBRC 14720 / NCIMB 2260 / Gabara) (Halobacterium pharaonis)).